The primary structure comprises 228 residues: Prolactin-2A1 (228 aa).

A signal peptide spans 1 to 28; that stretch reads MQLSVTHPCCRTLILLLVSNLLLWESEA. Intrachain disulfides connect Cys87/Cys203 and Cys220/Cys228.

This sequence belongs to the somatotropin/prolactin family. In terms of tissue distribution, expressed specifically in the placenta. Expression restricted to the junctional zone of the chorioallantoic placenta.

Its subcellular location is the secreted. This chain is Prolactin-2A1 (Prl2a1), found in Mus musculus (Mouse).